The primary structure comprises 249 residues: Cell surface glycoprotein CD200 receptor 2 (249 aa).

Residues 1-24 form the signal peptide; sequence MHALGRTPALTLLIFIYNFVSVYT. One can recognise an Ig-like V-type domain in the interval 25–124; it reads IVSVQMGTKA…GNFHKVYDLQ (100 aa). Over 25 to 220 the chain is Extracellular; the sequence is IVSVQMGTKA…TTSTTPSLLT (196 aa). Cys38 and Cys108 are joined by a disulfide. 3 N-linked (GlcNAc...) asparagine glycosylation sites follow: Asn73, Asn138, and Asn171. The 96-residue stretch at 113 to 208 folds into the Ig-like C2-type domain; sequence PEGNFHKVYD…GNQSLSIELS (96 aa). A disulfide bridge links Cys143 with Cys192. Residues 221 to 241 traverse the membrane as a helical segment; that stretch reads ILYVKMVLLGIILLKVGFAFF. Residues 242-249 lie on the Cytoplasmic side of the membrane; it reads QKRNVTRT.

This sequence belongs to the CD200R family. As to expression, expressed in bone marrow, spleen, brain, lung, testis and thymus.

The protein resides in the membrane. In terms of biological role, according to PubMed:15187158 it is a receptor for the CD200 cell surface glycoprotein. According to PubMed:16081818 it is not a receptor for the CD200/OX2 cell surface glycoprotein. Involved in the recruitment or surface expression of the TYROBP receptor. The chain is Cell surface glycoprotein CD200 receptor 2 (Cd200r1l) from Mus musculus (Mouse).